Reading from the N-terminus, the 466-residue chain is ATP-dependent protease ATPase subunit HslU (466 aa).

Residues Ile18, 60–65 (GVGKTE), Asp279, Glu344, and Arg416 each bind ATP.

The protein belongs to the ClpX chaperone family. HslU subfamily. As to quaternary structure, a double ring-shaped homohexamer of HslV is capped on each side by a ring-shaped HslU homohexamer. The assembly of the HslU/HslV complex is dependent on binding of ATP.

The protein resides in the cytoplasm. Its function is as follows. ATPase subunit of a proteasome-like degradation complex; this subunit has chaperone activity. The binding of ATP and its subsequent hydrolysis by HslU are essential for unfolding of protein substrates subsequently hydrolyzed by HslV. HslU recognizes the N-terminal part of its protein substrates and unfolds these before they are guided to HslV for hydrolysis. The protein is ATP-dependent protease ATPase subunit HslU of Syntrophomonas wolfei subsp. wolfei (strain DSM 2245B / Goettingen).